Here is a 460-residue protein sequence, read N- to C-terminus: G2/mitotic-specific cyclin-4 (460 aa).

Belongs to the cyclin family. Cyclin AB subfamily.

Essential for the control of the cell cycle at the G2/M (mitosis) transition. Interacts with the CDC2 protein kinase to form MPF. G2/M cyclins accumulate steadily during G2 and are abruptly destroyed at mitosis. The sequence is that of G2/mitotic-specific cyclin-4 (CLB4) from Saccharomyces cerevisiae (strain ATCC 204508 / S288c) (Baker's yeast).